The chain runs to 454 residues: PC-esterase domain-containing protein 1A (454 aa).

The protein belongs to the PC-esterase family.

In Homo sapiens (Human), this protein is PC-esterase domain-containing protein 1A (PCED1A).